The sequence spans 40 residues: Protamine-1 (40 aa).

The tract at residues 1–40 (MPPRRKRVSSAPRRRRRTYRRTTAHKHQDRPVHRRRRRRH) is disordered.

Testis.

It localises to the nucleus. Its subcellular location is the chromosome. In terms of biological role, protamines substitute for histones in the chromatin of sperm during the haploid phase of spermatogenesis. They compact sperm DNA into a highly condensed, stable and inactive complex. The protein is Protamine-1 (PBP1) of Bufo japonicus (Japanese common toad).